The sequence spans 222 residues: Transmembrane protein 114 (222 aa).

The chain crosses the membrane as a helical span at residues 7–27; it reads ALAGAAALSGALSFVLLAAAI. 2 N-linked (GlcNAc...) asparagine glycosylation sites follow: asparagine 54 and asparagine 88. The next 3 helical transmembrane spans lie at 105–125, 133–153, and 188–208; these read FVIL…TGFL, LLLL…LTGI, and LALG…FLAA.

It is found in the cell junction. It localises to the tight junction. The protein resides in the lateral cell membrane. Its subcellular location is the apical cell membrane. The sequence is that of Transmembrane protein 114 from Mus musculus (Mouse).